A 264-amino-acid polypeptide reads, in one-letter code: Glutamate racemase (264 aa).

Substrate is bound by residues 11–12 and 43–44; these read DS and YG. The active-site Proton donor/acceptor is cysteine 74. Position 75-76 (75-76) interacts with substrate; the sequence is NT. The active-site Proton donor/acceptor is cysteine 193. Residue 194–195 coordinates substrate; the sequence is TH.

This sequence belongs to the aspartate/glutamate racemases family.

It catalyses the reaction L-glutamate = D-glutamate. Its pathway is cell wall biogenesis; peptidoglycan biosynthesis. In terms of biological role, provides the (R)-glutamate required for cell wall biosynthesis. This chain is Glutamate racemase, found in Bifidobacterium longum subsp. infantis (strain ATCC 15697 / DSM 20088 / JCM 1222 / NCTC 11817 / S12).